The sequence spans 576 residues: 2-succinyl-5-enolpyruvyl-6-hydroxy-3-cyclohexene-1-carboxylate synthase (576 aa).

This sequence belongs to the TPP enzyme family. MenD subfamily. Homodimer. Mg(2+) serves as cofactor. Mn(2+) is required as a cofactor. The cofactor is thiamine diphosphate.

It carries out the reaction isochorismate + 2-oxoglutarate + H(+) = 5-enolpyruvoyl-6-hydroxy-2-succinyl-cyclohex-3-ene-1-carboxylate + CO2. Its pathway is quinol/quinone metabolism; 1,4-dihydroxy-2-naphthoate biosynthesis; 1,4-dihydroxy-2-naphthoate from chorismate: step 2/7. The protein operates within quinol/quinone metabolism; menaquinone biosynthesis. Functionally, catalyzes the thiamine diphosphate-dependent decarboxylation of 2-oxoglutarate and the subsequent addition of the resulting succinic semialdehyde-thiamine pyrophosphate anion to isochorismate to yield 2-succinyl-5-enolpyruvyl-6-hydroxy-3-cyclohexene-1-carboxylate (SEPHCHC). The chain is 2-succinyl-5-enolpyruvyl-6-hydroxy-3-cyclohexene-1-carboxylate synthase from Aliivibrio fischeri (strain ATCC 700601 / ES114) (Vibrio fischeri).